We begin with the raw amino-acid sequence, 89 residues long: Small ribosomal subunit protein uS15 (89 aa).

The protein belongs to the universal ribosomal protein uS15 family. In terms of assembly, part of the 30S ribosomal subunit. Forms a bridge to the 50S subunit in the 70S ribosome, contacting the 23S rRNA.

Its function is as follows. One of the primary rRNA binding proteins, it binds directly to 16S rRNA where it helps nucleate assembly of the platform of the 30S subunit by binding and bridging several RNA helices of the 16S rRNA. In terms of biological role, forms an intersubunit bridge (bridge B4) with the 23S rRNA of the 50S subunit in the ribosome. The protein is Small ribosomal subunit protein uS15 of Yersinia enterocolitica serotype O:8 / biotype 1B (strain NCTC 13174 / 8081).